Consider the following 436-residue polypeptide: 3-ketoacyl-CoA thiolase (436 aa).

Cys99 acts as the Acyl-thioester intermediate in catalysis. Active-site proton acceptor residues include His392 and Cys422.

The protein belongs to the thiolase-like superfamily. Thiolase family. As to quaternary structure, heterotetramer of two alpha chains (FadJ) and two beta chains (FadI).

Its subcellular location is the cytoplasm. It carries out the reaction an acyl-CoA + acetyl-CoA = a 3-oxoacyl-CoA + CoA. The protein operates within lipid metabolism; fatty acid beta-oxidation. Functionally, catalyzes the final step of fatty acid oxidation in which acetyl-CoA is released and the CoA ester of a fatty acid two carbons shorter is formed. The protein is 3-ketoacyl-CoA thiolase of Escherichia coli O7:K1 (strain IAI39 / ExPEC).